The chain runs to 591 residues: V-type ATP synthase alpha chain (591 aa).

ATP is bound at residue 242–249 (GPFGAGKT).

It belongs to the ATPase alpha/beta chains family.

The catalysed reaction is ATP + H2O + 4 H(+)(in) = ADP + phosphate + 5 H(+)(out). Its function is as follows. Produces ATP from ADP in the presence of a proton gradient across the membrane. The V-type alpha chain is a catalytic subunit. This Chlamydia trachomatis serovar A (strain ATCC VR-571B / DSM 19440 / HAR-13) protein is V-type ATP synthase alpha chain.